The following is a 385-amino-acid chain: MVKSYWKKFWGSNVTKSQHFIELNDIAYGNAKKIRVGIDAYRENVIVYRCVNLIAQSAGHVPWKVLKSKSGEVIANHPLNNLLKRPNPEKAGADFFSELISSMLLFGNSYILSTSDFRPKEIYLLPASATEAVLDQNVLVAYKYQSASGDKLYRIDPISKISRVLHLKNYHPTNHHYGLSSLEAASLPIDLHQQSSYWNHSLLQNGARPSGALIVKDSNGYLSDEQFERLQAQLSEKFTGSNNAGKPLLLEGGLGWQEMSINPKDMDFIQSKNSAAREIALAFGVPPQLLGINGDNTYSNMQEARLALWEETLIPLLDKIADNISNWFSYLFNEEITIDFDSDSISALTEKRENLWAKIANANFMTLNEKRAFVGLPKIKDGDSL.

The protein belongs to the phage portal family. HK97 subfamily.

This is an uncharacterized protein from Rickettsia bellii (strain RML369-C).